The chain runs to 320 residues: Porphobilinogen deaminase (320 aa).

An S-(dipyrrolylmethanemethyl)cysteine modification is found at C251.

The protein belongs to the HMBS family. Monomer. Dipyrromethane serves as cofactor.

The enzyme catalyses 4 porphobilinogen + H2O = hydroxymethylbilane + 4 NH4(+). Its pathway is porphyrin-containing compound metabolism; protoporphyrin-IX biosynthesis; coproporphyrinogen-III from 5-aminolevulinate: step 2/4. Its function is as follows. Tetrapolymerization of the monopyrrole PBG into the hydroxymethylbilane pre-uroporphyrinogen in several discrete steps. This is Porphobilinogen deaminase from Phenylobacterium zucineum (strain HLK1).